Reading from the N-terminus, the 206-residue chain is Ribosomal RNA large subunit methyltransferase E (206 aa).

The S-adenosyl-L-methionine site is built by Gly-60, Trp-62, Asp-80, Asp-96, and Asp-121. Lys-161 acts as the Proton acceptor in catalysis.

The protein belongs to the class I-like SAM-binding methyltransferase superfamily. RNA methyltransferase RlmE family.

It localises to the cytoplasm. The enzyme catalyses uridine(2552) in 23S rRNA + S-adenosyl-L-methionine = 2'-O-methyluridine(2552) in 23S rRNA + S-adenosyl-L-homocysteine + H(+). Specifically methylates the uridine in position 2552 of 23S rRNA at the 2'-O position of the ribose in the fully assembled 50S ribosomal subunit. In Hahella chejuensis (strain KCTC 2396), this protein is Ribosomal RNA large subunit methyltransferase E.